The following is a 455-amino-acid chain: Single-stranded DNA-binding protein homolog sam-10 (455 aa).

Residues 19–51 enclose the LisH domain; the sequence is ARDRLTSYIYEYLQQTGASKTAETFKEEVLSTN. Disordered stretches follow at residues 217–249, 281–302, 314–343, and 357–442; these read PPPG…LNSP, SDHQ…TAGG, GPGS…HQPK, and EALT…NGEI. Composition is skewed to low complexity over residues 288–298 and 321–336; these read AGPAAAAPGAT and VATT…SSIG. Positions 396–406 are enriched in polar residues; sequence HSVNNNVNPGT. Residues 407-421 show a composition bias toward low complexity; sequence PGSNPLSNPMSNPPL.

In terms of tissue distribution, ubiquitously expressed with higher expression in the head and tail ganglia, the vulva and PLM neurons.

It is found in the cytoplasm. It localises to the nucleus. Involved cell autonomously in PLM neuron pre-synaptic differentiation by negatively regulating prk-2 expression and in neurite branch positioning. The sequence is that of Single-stranded DNA-binding protein homolog sam-10 from Caenorhabditis elegans.